We begin with the raw amino-acid sequence, 218 residues long: Probable septum site-determining protein MinC (218 aa).

This sequence belongs to the MinC family. Interacts with MinD and FtsZ.

In terms of biological role, cell division inhibitor that blocks the formation of polar Z ring septums. Rapidly oscillates between the poles of the cell to destabilize FtsZ filaments that have formed before they mature into polar Z rings. Prevents FtsZ polymerization. The sequence is that of Probable septum site-determining protein MinC from Moorella thermoacetica (strain ATCC 39073 / JCM 9320).